We begin with the raw amino-acid sequence, 207 residues long: Ras-related protein Rab-7a (207 aa).

T2 carries the N-acetylthreonine modification. Positions 17, 18, 19, 20, 21, 22, 23, 34, 35, 37, and 40 each coordinate GTP. Residue T22 participates in Mg(2+) binding. Residues 28 to 41 carry the Switch 1 motif; sequence YVNKKFSNQYKATI. Mg(2+) is bound by residues T40 and D63. G66 lines the GTP pocket. The Switch 2 motif lies at 67–82; that stretch reads QERFQSLSVAFYRGAD. The residue at position 72 (S72) is a Phosphoserine. Residues N125, K126, D128, A156, and K157 each coordinate GTP. Glycyl lysine isopeptide (Lys-Gly) (interchain with G-Cter in ubiquitin) cross-links involve residues K191 and K194. 2 S-geranylgeranyl cysteine lipidation sites follow: C205 and C207. At C207 the chain carries Cysteine methyl ester.

The protein belongs to the small GTPase superfamily. Rab family. Interacts with NTRK1/TRKA. Interacts with RILP. Interacts with PSMA7. Interacts with RNF115. Interacts with FYCO1. Interacts with the PIK3C3/VPS34-PIK3R4 complex. The GTP-bound form interacts with OSBPL1A. The GTP-bound form interacts with RAC1. Interacts with CLN3. Interacts with CHM, the substrate-binding subunit of the Rab geranylgeranyltransferase complex. Interacts with C9orf72. Does not interact with HPS4 and the BLOC-3 complex (heterodimer of HPS1 and HPS4). Interacts with CLN5. Interacts with PLEKHM1 (via N- and C-terminus). Interacts with PRPH; the interaction is direct. Interacts with VPS13A. The GDP-bound form interacts with RIMOC1. Interacts with the MON1A-CCZ1B complex and this interaction is enhanced in the presence of RIMOC1. Interacts with VPS39 and VPS41. Forms a ternary complex with LAMP2 and RUFY4; the interaction with LAMP2 is mediated by RUFY4 (via RUN and coiled coil domains). It depends on Mg(2+) as a cofactor. In terms of processing, deubiquitination at Lys-191 and Lys-194 by USP32. Post-translationally, phosphorylated at Ser-72 by LRRK1; phosphorylation is dependent on protein kinase C (PKC) activation of LRRK1. Prenylated. Prenylation is required for association with cellular membranes.

It is found in the cytoplasmic vesicle. The protein localises to the phagosome membrane. Its subcellular location is the late endosome membrane. It localises to the lysosome membrane. The protein resides in the melanosome membrane. It is found in the autophagosome membrane. The protein localises to the lipid droplet. Its subcellular location is the endosome membrane. It localises to the mitochondrion membrane. It carries out the reaction GTP + H2O = GDP + phosphate + H(+). Its activity is regulated as follows. Regulated by guanine nucleotide exchange factors (GEFs) which promote the exchange of bound GDP for free GTP. Regulated by GTPase activating proteins (GAPs) which increase the GTP hydrolysis activity. Inhibited by GDP dissociation inhibitors (GDIs). The small GTPases Rab are key regulators of intracellular membrane trafficking, from the formation of transport vesicles to their fusion with membranes. Rabs cycle between an inactive GDP-bound form and an active GTP-bound form that is able to recruit to membranes different sets of downstream effectors directly responsible for vesicle formation, movement, tethering and fusion. In its active state, RAB7A binds to a variety of effector proteins playing a key role in the regulation of endo-lysosomal trafficking. Governs early-to-late endosomal maturation, microtubule minus-end as well as plus-end directed endosomal migration and positioning, and endosome-lysosome transport through different protein-protein interaction cascades. Also plays a central role in growth-factor-mediated cell signaling, nutrient-transporter-mediated nutrient uptake, neurotrophin transport in the axons of neurons and lipid metabolism. Also involved in regulation of some specialized endosomal membrane trafficking, such as maturation of melanosomes, pathogen-induced phagosomes (or vacuoles) and autophagosomes. Plays a role in the maturation and acidification of phagosomes that engulf pathogens, such as S.aureus and Mycobacteria. Plays a role in the fusion of phagosomes with lysosomes. In concert with RAC1, plays a role in regulating the formation of RBs (ruffled borders) in osteoclasts. Controls the endosomal trafficking and neurite outgrowth signaling of NTRK1/TRKA. Regulates the endocytic trafficking of the EGF-EGFR complex by regulating its lysosomal degradation. Involved in the ADRB2-stimulated lipolysis through lipophagy, a cytosolic lipase-independent autophagic pathway. Required for the exosomal release of SDCBP, CD63 and syndecan. Required for vesicular trafficking and cell surface expression of ACE2. May play a role in PRPH neuronal intermediate filament assembly. The sequence is that of Ras-related protein Rab-7a (RAB7A) from Oryctolagus cuniculus (Rabbit).